We begin with the raw amino-acid sequence, 464 residues long: Fumarate hydratase class II (464 aa).

Substrate is bound by residues 97–99 (SGT), 128–131 (HPND), 138–140 (SSN), and threonine 186. The active-site Proton donor/acceptor is histidine 187. The active site involves serine 317. Substrate contacts are provided by residues serine 318 and 323-325 (KVN).

Belongs to the class-II fumarase/aspartase family. Fumarase subfamily. As to quaternary structure, homotetramer.

The protein resides in the cytoplasm. The catalysed reaction is (S)-malate = fumarate + H2O. It participates in carbohydrate metabolism; tricarboxylic acid cycle; (S)-malate from fumarate: step 1/1. Functionally, involved in the TCA cycle. Catalyzes the stereospecific interconversion of fumarate to L-malate. This Leptospira interrogans serogroup Icterohaemorrhagiae serovar copenhageni (strain Fiocruz L1-130) protein is Fumarate hydratase class II.